Consider the following 1399-residue polypeptide: Stress response protein NST1 (1399 aa).

Positions 28 to 52 (SANTQGNSHQIPRKQSQSTNSNHQE) are enriched in polar residues. 10 disordered regions span residues 28–105 (SANT…VIKQ), 119–155 (EDEN…NEST), 202–249 (TRHH…NNGN), 318–353 (QQKY…QDQN), 546–574 (TVIS…VDDD), 589–681 (NPHH…EEEK), 722–894 (EAEE…VNDD), 949–990 (AKLM…SSFQ), 1134–1178 (SGNQ…NNNN), and 1373–1399 (PPIG…RLWN). Over residues 53–69 (QSQQARNQSSQSNTNTT) the composition is skewed to low complexity. Basic residues predominate over residues 70-82 (SRKKRKKHKKKSK). The segment covering 140–154 (SSKSNTRKNSSVNES) has biased composition (polar residues). The segment covering 207-249 (QQQLSSSVSSQPQQQQSQQNVSTSSNNGSSSGINNNSNNNNGN) has biased composition (low complexity). Over residues 331–340 (STSVSPQPES) the composition is skewed to polar residues. Over residues 341–353 (QDNKQLKKSQDQN) the composition is skewed to basic and acidic residues. The span at 547-566 (VISQNPQEQKSVSIGQSDQS) shows a compositional bias: polar residues. Residues 591-618 (HHHHHHHQHSNKQHDHHHCHNHRHRHRR) are compositionally biased toward basic residues. The span at 622 to 678 (ELDDEHDQENEDEELEDDEEDYYDEYDDDEEEDEEEDEDDDDIEEEGASDTESEISE) shows a compositional bias: acidic residues. Positions 708 to 896 (KLSQDRTQKL…TKLMVNDDDE (189 aa)) form a coiled coil. Basic and acidic residues-rich tracts occupy residues 722–743 (EAEE…EKAK) and 752–888 (AKEE…ERTK). Over residues 1134 to 1156 (SGNQSGISAPTTTSTNTSSRNNS) the composition is skewed to low complexity. Polar residues-rich tracts occupy residues 1157–1172 (IWGN…PSLL) and 1377–1390 (ESST…NVGN).

This sequence belongs to the NST1 family.

It is found in the cytoplasm. Functionally, may act as a negative regulator of salt tolerance. In Candida albicans (strain SC5314 / ATCC MYA-2876) (Yeast), this protein is Stress response protein NST1 (NST1).